A 699-amino-acid chain; its full sequence is Protein STRUBBELIG-RECEPTOR FAMILY 5 (699 aa).

An N-terminal signal peptide occupies residues 1–22; that stretch reads MTQKLVRLVIVSLAITVTLLQA. The Extracellular segment spans residues 23 to 273; it reads KTDNQEVSAL…DGGGITAGTG (251 aa). LRR repeat units lie at residues 93-115, 116-136, 139-161, 163-186, and 187-209; these read SLTT…LPPN, IANL…SLSQ, NLQS…FQKL, KLET…ANLT, and SLKK…RNLA. Asn184 carries an N-linked (GlcNAc...) asparagine glycan. The segment at 239–263 is disordered; sequence NDWSTETAPPPPPGVKYGRKSSGSK. A helical transmembrane segment spans residues 274–294; it reads MVIAGACLGVLVLIIVLIALV. Over 295–699 the chain is Cytoplasmic; that stretch reads SKKKSSLSPH…SYRAHDDYDY (405 aa). Position 368 is a phosphoserine (Ser368). Residues 404–675 form the Protein kinase domain; that stretch reads FSPGNLLGEG…SEVVEALVRM (272 aa). ATP is bound by residues 410 to 418 and Lys432; that span reads LGEGSIGRV.

The protein belongs to the protein kinase superfamily. Ser/Thr protein kinase family. As to expression, expressed in leaves and flowers.

Its subcellular location is the membrane. In Arabidopsis thaliana (Mouse-ear cress), this protein is Protein STRUBBELIG-RECEPTOR FAMILY 5 (SRF5).